Reading from the N-terminus, the 426-residue chain is MSAVVLVGAQWGDEGKGKITDFLAEKANCVVRYQGGSNAGHTVEVSQEKFMLHLIPSGILYPETLCVIGNGVVVDMGKLIEEIDGLQKRGIDTSNLRISLRSPVVMPYHKRIDELEDRHTRIGTTKRGIGPAYADKINRIGFRMGDILTGGECFRERFKAQIEYKNRIMEEIYQEDGFDYQQMLNEVLGQAEQLKKYLADTSYLVYTAIKEGKKVLFEGAQGTLLDIDHGTYPYVTSSHPIAGGACVGTGIGPTNISKVLGVAKAYTTRVGEGPFPTELNDFQGEILRDKGQEYGTTTGRPRRCGWLDTVILRYAVRINGLTDFAITKLDVLDSFSTIKICVAYRYKGQLLTEFPNNIAILDDCEPEYIELPGWQEDISAASSIEDLPLNARAYVAKIEELTGVKAAIIAVGPKRKQTIVNSPLFT.

GTP is bound by residues 12–18 (GDEGKGK) and 40–42 (GHT). Asp-13 acts as the Proton acceptor in catalysis. Mg(2+) is bound by residues Asp-13 and Gly-40. IMP is bound by residues 13–16 (DEGK), 38–41 (NAGH), Thr-125, Arg-139, Gln-221, Thr-236, and Arg-300. His-41 serves as the catalytic Proton donor. 296 to 302 (TTTGRPR) lines the substrate pocket. Residues Arg-302, 328–330 (KLD), and 410–412 (AVG) contribute to the GTP site.

This sequence belongs to the adenylosuccinate synthetase family. Homodimer. It depends on Mg(2+) as a cofactor.

Its subcellular location is the cytoplasm. The catalysed reaction is IMP + L-aspartate + GTP = N(6)-(1,2-dicarboxyethyl)-AMP + GDP + phosphate + 2 H(+). Its pathway is purine metabolism; AMP biosynthesis via de novo pathway; AMP from IMP: step 1/2. Functionally, plays an important role in the de novo pathway of purine nucleotide biosynthesis. Catalyzes the first committed step in the biosynthesis of AMP from IMP. The protein is Adenylosuccinate synthetase of Syntrophomonas wolfei subsp. wolfei (strain DSM 2245B / Goettingen).